Here is a 226-residue protein sequence, read N- to C-terminus: Thioredoxin domain-containing protein 9 (226 aa).

Residues 74-180 enclose the Thioredoxin domain; it reads REIPSERDFF…TTETLEWRLG (107 aa). Residues S188, S221, and S223 each carry the phosphoserine modification.

In terms of assembly, forms ternary complexes with the chaperonin TCP1 complex, spanning the cylindrical chaperonin cavity and contacting at least 2 subunits.

Its subcellular location is the cytoplasm. The protein resides in the nucleus. The protein localises to the cytoskeleton. It is found in the microtubule organizing center. It localises to the centrosome. Its subcellular location is the midbody. Functionally, significantly diminishes the chaperonin TCP1 complex ATPase activity, thus negatively impacts protein folding, including that of actin or tubulin. The chain is Thioredoxin domain-containing protein 9 (TXNDC9) from Homo sapiens (Human).